The following is a 132-amino-acid chain: Protein FAM174C (132 aa).

The signal sequence occupies residues 1–26 (MGPRVLQPPLLLLLLALLLAALPCGA). The segment at 34–66 (PAQVTLSPPPAVTNGSQPGAPHNSTHTRPPGAS) is disordered. Residues 46-60 (TNGSQPGAPHNSTHT) are compositionally biased toward polar residues. Asn-47 carries an N-linked (GlcNAc...) asparagine glycan. The helical transmembrane segment at 73-93 (SFYVILGFCGLTALYFLIRAF) threads the bilayer. A Phosphothreonine modification is found at Thr-113. The disordered stretch occupies residues 113-132 (TEMASLDSDEETVFESRNLR). Phosphoserine is present on residues Ser-117 and Ser-120.

This sequence belongs to the FAM174 family.

The protein localises to the membrane. This Homo sapiens (Human) protein is Protein FAM174C.